Reading from the N-terminus, the 226-residue chain is Deoxyribose-phosphate aldolase (226 aa).

Catalysis depends on Asp84, which acts as the Proton donor/acceptor. The Schiff-base intermediate with acetaldehyde role is filled by Lys146. Lys188 functions as the Proton donor/acceptor in the catalytic mechanism.

It belongs to the DeoC/FbaB aldolase family. DeoC type 1 subfamily.

The protein resides in the cytoplasm. The enzyme catalyses 2-deoxy-D-ribose 5-phosphate = D-glyceraldehyde 3-phosphate + acetaldehyde. Its pathway is carbohydrate degradation; 2-deoxy-D-ribose 1-phosphate degradation; D-glyceraldehyde 3-phosphate and acetaldehyde from 2-deoxy-alpha-D-ribose 1-phosphate: step 2/2. Catalyzes a reversible aldol reaction between acetaldehyde and D-glyceraldehyde 3-phosphate to generate 2-deoxy-D-ribose 5-phosphate. The polypeptide is Deoxyribose-phosphate aldolase (Pyrobaculum arsenaticum (strain DSM 13514 / JCM 11321 / PZ6)).